Reading from the N-terminus, the 358-residue chain is Protein ocs (358 aa).

The protein belongs to the lysopine/nopaline/octopine/opine/vitopine dehydrogenases family. In terms of assembly, monomer.

It catalyses the reaction D-octopine + NAD(+) + H2O = L-arginine + pyruvate + NADH + H(+). The enzyme catalyses D-lysopine + NADP(+) + H2O = L-lysine + pyruvate + NADPH + H(+). Its function is as follows. Reductive condensation of pyruvate and arginine, lysine, histidine, or octopine to form octopine, lysopine, histopine, or octopinic acid, respectively. NADPH is the preferred cofactor, but NADH can also be used. This chain is Protein ocs (ocs), found in Agrobacterium tumefaciens (strain Ach5).